The sequence spans 273 residues: Putative pyruvate, phosphate dikinase regulatory protein (273 aa).

An ADP-binding site is contributed by 153 to 160 (GVSRTSKS).

This sequence belongs to the pyruvate, phosphate/water dikinase regulatory protein family. PDRP subfamily.

The catalysed reaction is N(tele)-phospho-L-histidyl/L-threonyl-[pyruvate, phosphate dikinase] + ADP = N(tele)-phospho-L-histidyl/O-phospho-L-threonyl-[pyruvate, phosphate dikinase] + AMP + H(+). The enzyme catalyses N(tele)-phospho-L-histidyl/O-phospho-L-threonyl-[pyruvate, phosphate dikinase] + phosphate + H(+) = N(tele)-phospho-L-histidyl/L-threonyl-[pyruvate, phosphate dikinase] + diphosphate. Functionally, bifunctional serine/threonine kinase and phosphorylase involved in the regulation of the pyruvate, phosphate dikinase (PPDK) by catalyzing its phosphorylation/dephosphorylation. The sequence is that of Putative pyruvate, phosphate dikinase regulatory protein from Ehrlichia chaffeensis (strain ATCC CRL-10679 / Arkansas).